A 331-amino-acid chain; its full sequence is Ketol-acid reductoisomerase (NADP(+)) (331 aa).

Residues 2–182 (AQLFYDSDAD…GGTRAGILET (181 aa)) form the KARI N-terminal Rossmann domain. Residues 25-28 (YGSQ), Ser-51, Ser-53, and 83-86 (DEFQ) each bind NADP(+). The active site involves His-108. Gly-134 contributes to the NADP(+) binding site. One can recognise a KARI C-terminal knotted domain in the interval 183-328 (NFKEETETDL…KGLRSMFSWL (146 aa)). Residues Asp-191, Glu-195, Glu-227, and Glu-231 each contribute to the Mg(2+) site. Ser-252 provides a ligand contact to substrate.

It belongs to the ketol-acid reductoisomerase family. Mg(2+) serves as cofactor.

It carries out the reaction (2R)-2,3-dihydroxy-3-methylbutanoate + NADP(+) = (2S)-2-acetolactate + NADPH + H(+). The catalysed reaction is (2R,3R)-2,3-dihydroxy-3-methylpentanoate + NADP(+) = (S)-2-ethyl-2-hydroxy-3-oxobutanoate + NADPH + H(+). The protein operates within amino-acid biosynthesis; L-isoleucine biosynthesis; L-isoleucine from 2-oxobutanoate: step 2/4. It functions in the pathway amino-acid biosynthesis; L-valine biosynthesis; L-valine from pyruvate: step 2/4. Its function is as follows. Involved in the biosynthesis of branched-chain amino acids (BCAA). Catalyzes an alkyl-migration followed by a ketol-acid reduction of (S)-2-acetolactate (S2AL) to yield (R)-2,3-dihydroxy-isovalerate. In the isomerase reaction, S2AL is rearranged via a Mg-dependent methyl migration to produce 3-hydroxy-3-methyl-2-ketobutyrate (HMKB). In the reductase reaction, this 2-ketoacid undergoes a metal-dependent reduction by NADPH to yield (R)-2,3-dihydroxy-isovalerate. This chain is Ketol-acid reductoisomerase (NADP(+)), found in Parasynechococcus marenigrum (strain WH8102).